The primary structure comprises 432 residues: MSNDETVEKVTQQVSELKSTDVKEQVVTPWDVEGGVDEQGRAQNIDYDKLIKQFGTKPVNEETLKRFKQVTGREPHHFLRKGLFFSERDFTKILDLYEQGKPFFLYTGRGPSSDSMHLGHMIPFVFTKWLQEVFDVPLVIELTDDEKFLFKHKLTINDVKNFARENAKDIIAVGFDPKNTFIFSDLQYMGGAFYETVVRVSRQITGSTAKAVFGFNDSDCIGKFHFASIQIATAFPSSFPNVLGLPDKTPCLIPCAIDQDPYFRVCRDVADKLKYSKPALLHSRFFPALQGSTTKMSASDDTTAIFMTDTPKQIQKKINKYAFSGGQVSADLHRELGGNPDVDVAYQYLSFFKDDDVFLKECYDKYKSGELLSGEMKKLCIETLQEFVKAFQERRAQVDEETLDKFMVPHKLVWGEKERLVAPKPKTKQEKK.

Positions 111-120 match the 'HIGH' region motif; sequence PSSDSMHLGH. The short motif at 295 to 299 is the 'KMSKS' region element; it reads KMSAS.

This sequence belongs to the class-I aminoacyl-tRNA synthetase family. In terms of assembly, homodimer.

The protein localises to the cytoplasm. The enzyme catalyses tRNA(Trp) + L-tryptophan + ATP = L-tryptophyl-tRNA(Trp) + AMP + diphosphate + H(+). The chain is Tryptophan--tRNA ligase, cytoplasmic (WRS1) from Saccharomyces cerevisiae (strain ATCC 204508 / S288c) (Baker's yeast).